A 272-amino-acid chain; its full sequence is 3-methyl-2-oxobutanoate hydroxymethyltransferase (272 aa).

2 residues coordinate Mg(2+): D51 and D90. Residues 51–52, D90, and K120 contribute to the 3-methyl-2-oxobutanoate site; that span reads DS. E122 contacts Mg(2+). The active-site Proton acceptor is the E189.

The protein belongs to the PanB family. As to quaternary structure, homodecamer; pentamer of dimers. Requires Mg(2+) as cofactor.

The protein resides in the cytoplasm. The catalysed reaction is 3-methyl-2-oxobutanoate + (6R)-5,10-methylene-5,6,7,8-tetrahydrofolate + H2O = 2-dehydropantoate + (6S)-5,6,7,8-tetrahydrofolate. It functions in the pathway cofactor biosynthesis; (R)-pantothenate biosynthesis; (R)-pantoate from 3-methyl-2-oxobutanoate: step 1/2. Its function is as follows. Catalyzes the reversible reaction in which hydroxymethyl group from 5,10-methylenetetrahydrofolate is transferred onto alpha-ketoisovalerate to form ketopantoate. The chain is 3-methyl-2-oxobutanoate hydroxymethyltransferase from Syntrophus aciditrophicus (strain SB).